We begin with the raw amino-acid sequence, 202 residues long: Protein lin-28 homolog A (202 aa).

2 disordered regions span residues M1–H33 and S100–G128. The segment covering E18–S29 has biased composition (acidic residues). Residues H33 to P106 form the CSD domain. The tract at residues G107–R130 is flexible linker. CCHC-type zinc fingers lie at residues D129 to L146 and K151 to I168. C131, C134, H139, C144, C153, C156, H161, and C166 together coordinate Zn(2+). A disordered region spans residues A170–D202. Residues Q171–T185 are compositionally biased toward polar residues. S174 is modified (phosphoserine).

It belongs to the lin-28 family. Monomer.

The protein resides in the cytoplasm. The protein localises to the rough endoplasmic reticulum. It is found in the P-body. Its subcellular location is the stress granule. It localises to the nucleus. The protein resides in the nucleolus. Its function is as follows. RNA-binding protein that inhibits processing of pre-let-7 miRNAs and regulates translation of mRNAs that control developmental timing, pluripotency and metabolism. Seems to recognize a common structural G-quartet (G4) feature in its miRNA and mRNA targets. 'Translational enhancer' that drives specific mRNAs to polysomes and increases the efficiency of protein synthesis. Its association with the translational machinery and target mRNAs results in an increased number of initiation events per molecule of mRNA and, indirectly, in mRNA stabilization. Suppressor of microRNA (miRNA) biogenesis, including that of let-7. Binds specific target miRNA precursors (pre-miRNAs), recognizing an 5'-GGAG-3' motif found in their terminal loop, and recruits uridylyltransferase. This results in the terminal uridylation of target pre-miRNAs. Uridylated pre-miRNAs fail to be processed by Dicer and undergo degradation. Localized to the periendoplasmic reticulum area, binds to a large number of spliced mRNAs and inhibits the translation of mRNAs destined for the ER, reducing the synthesis of transmembrane proteins, ER or Golgi lumen proteins, and secretory proteins. Binds to and enhances the translation of mRNAs for several metabolic enzymes, increasing glycolysis and oxidative phosphorylation. Which, with the let-7 repression may enhance tissue repair in adult tissue. In Danio rerio (Zebrafish), this protein is Protein lin-28 homolog A (lin28a).